We begin with the raw amino-acid sequence, 1729 residues long: Cullin-7 (1729 aa).

Residues 350-388 are disordered; sequence DRPRSSARSPGSIFQPQLADVSPGLPATQAQPSFRRSRH. Serine 371 is modified (phosphoserine). The region spanning 392–465 is the CPH domain; that stretch reads RSEFASGNTY…HWHMLEILGF (74 aa). Basic and acidic residues predominate over residues 632-642; it reads SEDAAKVEAKE. The disordered stretch occupies residues 632–654; sequence SEDAAKVEAKEPPSQSPNTPLQR. Positions 845 to 1024 constitute a DOC domain; the sequence is PINIPFFDVF…HTRLFYMVRA (180 aa). The disordered stretch occupies residues 1373–1405; it reads VGHGASGKEHKSEKEEEAGAAAAVDVAEGEEEE. A Glycyl lysine isopeptide (Lys-Gly) (interchain with G-Cter in NEDD8) cross-link involves residue lysine 1607.

Belongs to the cullin family. As to quaternary structure, component of the 3M complex, composed of core components CUL7, CCDC8 and OBSL1. Component of the Cul7-RING(FBXW8) complex consisting of CUL7, RBX1, SKP1 and FBXW8. Within the Cul7-RING(FBXW8) complex interacts with FBXW8 and RBX1, but not with SKP1. Interacts with CUL1 (via the C-terminal domain); the interaction seems to be mediated by FBXW8; it is likely specific to FBXW8, but not other F-box proteins. Interacts (via the CPH domain) with p53/TP53; the interaction preferentially involves tetrameric and dimeric p53/TP53; this interaction recruits p53/TP53 for ubiquitination by neddylated CUL1-RBX1. The CUL7-CUL9 heterodimer seems to interact specifically with p53/TP53. Interacts with FBXW8; interaction is mutually exclusive of binding to CUL9 or p53/TP53. Interacts with CUL9; leading to inhibited CUL9 activity. Interacts with OBSL1. Interacts (as part of the 3M complex) with HDAC4 and HDAC5; it is negatively regulated by ANKRA2.

Its subcellular location is the cytoplasm. The protein resides in the cytoskeleton. The protein localises to the microtubule organizing center. It localises to the centrosome. It is found in the perinuclear region. Its subcellular location is the golgi apparatus. It functions in the pathway protein modification; protein ubiquitination. Its function is as follows. Core component of the 3M and Cul7-RING(FBXW8) complexes, which mediate the ubiquitination and subsequent proteasomal degradation of target proteins. Core component of the 3M complex, a complex required to regulate microtubule dynamics and genome integrity. It is unclear how the 3M complex regulates microtubules, it could act by controlling the level of a microtubule stabilizer. The Cul7-RING(FBXW8) complex alone lacks ubiquitination activity and does not promote polyubiquitination and proteasomal degradation of p53/TP53. However it mediates recruitment of p53/TP53 for ubiquitination by neddylated CUL1-RBX1. Interaction with CUL9 is required to inhibit CUL9 activity and ubiquitination of BIRC5. The Cul7-RING(FBXW8) complex also mediates ubiquitination and consequent degradation of target proteins such as GORASP1, IRS1 and MAP4K1/HPK1. Ubiquitination of GORASP1 regulates Golgi morphogenesis and dendrite patterning in brain. Mediates ubiquitination and degradation of IRS1 in a mTOR-dependent manner: the Cul7-RING(FBXW8) complex recognizes and binds IRS1 previously phosphorylated by S6 kinase (RPS6KB1 or RPS6KB2). The Cul7-RING(FBXW8) complex also mediates ubiquitination of MAP4K1/HPK1: recognizes and binds autophosphorylated MAP4K1/HPK1, leading to its degradation, thereby affecting cell proliferation and differentiation. Acts as a regulator in trophoblast cell epithelial-mesenchymal transition and placental development. While the Cul7-RING(FBXW8) and the 3M complexes are associated and involved in common processes, CUL7 and the Cul7-RING(FBXW8) complex may have additional functions. Probably plays a role in the degradation of proteins involved in endothelial proliferation and/or differentiation. The sequence is that of Cullin-7 (CUL7) from Pongo abelii (Sumatran orangutan).